Consider the following 417-residue polypeptide: Serine/threonine-protein phosphatase 4 regulatory subunit 2 (417 aa).

Polar residues-rich tracts occupy residues 140–149 (EKNNSSSLNR), 158–170 (NSPS…NING), and 186–196 (APMTTNGLPES). The disordered stretch occupies residues 140–417 (EKNNSSSLNR…EVTDEPMEQD (278 aa)). Phosphoserine is present on Ser159. The segment covering 197-213 (TDSKEANLQQNEEKSHS) has biased composition (basic and acidic residues). Residues 214-226 (DSSTSESEVSSVS) show a composition bias toward low complexity. Ser226 is modified (phosphoserine). Residues 231-258 (KHPDEDAVEAEGHEVKRLRFDKEGEVRE) show a composition bias toward basic and acidic residues. Residues 259-269 (TASQTTSSEIS) show a composition bias toward polar residues. Over residues 283 to 297 (QDKDKDSRCTRQHCT) the composition is skewed to basic and acidic residues. Acidic residues predominate over residues 298–311 (EEDEEEDEEEEEES). A compositionally biased stretch (basic and acidic residues) spans 318-327 (MIPERKNQEK). The span at 338–350 (ETSEENNQMEESD) shows a compositional bias: acidic residues. Positions 353-363 (QAEKDLLHSEG) are enriched in basic and acidic residues. Residues 385–399 (GSNSSKTGEILSESS) show a composition bias toward polar residues. Residues 400 to 417 (MENDDEATEVTDEPMEQD) show a composition bias toward acidic residues.

The protein belongs to the PPP4R2 family. Serine/threonine-protein phosphatase 4 (PP4) occurs in different assemblies of the catalytic and one or more regulatory subunits. Component of the PP4 complexes PPP4C-PPP4R2, PPP4C-PPP4R2-PPP4R3A and PPP4C-PPP4R2-PPP4R3B. The PPP4C-PPP4R2 complex appears to be a tetramer composed of 2 molecules of PPP4C and 2 molecules of PPP4R2. Interacts with DDX20/GEMIN3 and GEMIN4. Interacts with RPA2; this DNA damage-dependent interaction recruits PPP4C leading to RPA2 dephosphorylation.

Its subcellular location is the cytoplasm. The protein localises to the cytoskeleton. It is found in the microtubule organizing center. The protein resides in the centrosome. It localises to the nucleus. Its function is as follows. Regulatory subunit of serine/threonine-protein phosphatase 4 (PP4). May regulate the activity of PPP4C at centrosomal microtubule organizing centers. Its interaction with the SMN complex leads to enhance the temporal localization of snRNPs, suggesting a role of PPP4C in maturation of spliceosomal snRNPs. The PPP4C-PPP4R2-PPP4R3A PP4 complex specifically dephosphorylates H2AX phosphorylated on 'Ser-140' (gamma-H2AX) generated during DNA replication and required for DNA double strand break repair. Mediates RPA2 dephosphorylation by recruiting PPP4C to RPA2 in a DNA damage-dependent manner. RPA2 dephosphorylation is required for the efficient RPA2-mediated recruitment of RAD51 to chromatin following double strand breaks, an essential step for DNA repair. The protein is Serine/threonine-protein phosphatase 4 regulatory subunit 2 (PPP4R2) of Pongo abelii (Sumatran orangutan).